The following is a 322-amino-acid chain: Ribose-phosphate pyrophosphokinase 1 (322 aa).

Residues 39 to 41 and 98 to 99 contribute to the ATP site; these read DGE and RQ. The Mg(2+) site is built by His132 and Asp173. Residue Lys196 is part of the active site. Residues Arg198, Asp224, and 228–232 contribute to the D-ribose 5-phosphate site; that span reads DTAGT.

This sequence belongs to the ribose-phosphate pyrophosphokinase family. Class I subfamily. Homohexamer. Mg(2+) serves as cofactor.

It localises to the cytoplasm. It catalyses the reaction D-ribose 5-phosphate + ATP = 5-phospho-alpha-D-ribose 1-diphosphate + AMP + H(+). Its pathway is metabolic intermediate biosynthesis; 5-phospho-alpha-D-ribose 1-diphosphate biosynthesis; 5-phospho-alpha-D-ribose 1-diphosphate from D-ribose 5-phosphate (route I): step 1/1. Involved in the biosynthesis of the central metabolite phospho-alpha-D-ribosyl-1-pyrophosphate (PRPP) via the transfer of pyrophosphoryl group from ATP to 1-hydroxyl of ribose-5-phosphate (Rib-5-P). In Streptococcus pneumoniae serotype 4 (strain ATCC BAA-334 / TIGR4), this protein is Ribose-phosphate pyrophosphokinase 1.